A 267-amino-acid chain; its full sequence is Tryptophan synthase alpha chain (267 aa).

Active-site proton acceptor residues include Glu47 and Asp58.

The protein belongs to the TrpA family. As to quaternary structure, tetramer of two alpha and two beta chains.

It catalyses the reaction (1S,2R)-1-C-(indol-3-yl)glycerol 3-phosphate + L-serine = D-glyceraldehyde 3-phosphate + L-tryptophan + H2O. It participates in amino-acid biosynthesis; L-tryptophan biosynthesis; L-tryptophan from chorismate: step 5/5. Its function is as follows. The alpha subunit is responsible for the aldol cleavage of indoleglycerol phosphate to indole and glyceraldehyde 3-phosphate. The polypeptide is Tryptophan synthase alpha chain (Chlorobaculum parvum (strain DSM 263 / NCIMB 8327) (Chlorobium vibrioforme subsp. thiosulfatophilum)).